The chain runs to 330 residues: Dof zinc finger protein DOF2.4 (330 aa).

Residues 14–25 show a composition bias toward polar residues; that stretch reads NWQQAPPSNYNH. Positions 14 to 70 are disordered; sequence NWQQAPPSNYNHDGTGASANGGHVLRPQLQPQQQPQQQPHPNGSGGGGGGGGGSIRA. Residues 40–55 show a composition bias toward low complexity; sequence PQLQPQQQPQQQPHPN. Over residues 56-68 the composition is skewed to gly residues; the sequence is GSGGGGGGGGGSI. The segment at 89-143 adopts a Dof-type zinc-finger fold; it reads LKCPRCESTNTKFCYFNNYSLTQPRHFCKTCRRYWTRGGALRNVPVGGGCRRNRR. Residues Cys91, Cys94, Cys116, and Cys119 each coordinate Zn(2+). Disordered regions lie at residues 133–165 and 255–276; these read PVGG…SFSS and QQSS…SANG. The segment covering 146 to 165 has biased composition (low complexity); it reads SNSNNNNNSTATSNNTSFSS. Positions 265–276 are enriched in polar residues; the sequence is EDSSNPNPSANG.

As to expression, specific to the vascular tissues. The PEAR proteins (e.g. DOF2.4, DOF5.1, DOF3.2, DOF1.1, DOF5.6 and DOF5.3) form a short-range concentration gradient that peaks at protophloem sieve elements (PSE).

The protein localises to the nucleus. It localises to the symplast. Its function is as follows. Transcription factor that binds specifically to a 5'-AA[AG]G-3' consensus core sequence. Probably involved in early processes for vascular development. The PEAR proteins (e.g. DOF2.4, DOF5.1, DOF3.2, DOF1.1, DOF5.6 and DOF5.3) activate gene expression that promotes radial growth of protophloem sieve elements. Triggers the transcription of HD-ZIP III genes, especially in the central domain of vascular tissue. The sequence is that of Dof zinc finger protein DOF2.4 from Arabidopsis thaliana (Mouse-ear cress).